Here is a 107-residue protein sequence, read N- to C-terminus: Phosphoribosyl-ATP pyrophosphatase (107 aa).

This sequence belongs to the PRA-PH family.

It is found in the cytoplasm. The enzyme catalyses 1-(5-phospho-beta-D-ribosyl)-ATP + H2O = 1-(5-phospho-beta-D-ribosyl)-5'-AMP + diphosphate + H(+). Its pathway is amino-acid biosynthesis; L-histidine biosynthesis; L-histidine from 5-phospho-alpha-D-ribose 1-diphosphate: step 2/9. The polypeptide is Phosphoribosyl-ATP pyrophosphatase (hisE) (Neisseria meningitidis serogroup A / serotype 4A (strain DSM 15465 / Z2491)).